The following is a 320-amino-acid chain: Ferrochelatase (320 aa).

His-194 and Glu-275 together coordinate Fe cation.

This sequence belongs to the ferrochelatase family.

It localises to the cytoplasm. It catalyses the reaction heme b + 2 H(+) = protoporphyrin IX + Fe(2+). Its pathway is porphyrin-containing compound metabolism; protoheme biosynthesis; protoheme from protoporphyrin-IX: step 1/1. Its function is as follows. Catalyzes the ferrous insertion into protoporphyrin IX. This chain is Ferrochelatase, found in Cronobacter sakazakii (strain ATCC BAA-894) (Enterobacter sakazakii).